The chain runs to 579 residues: Suppressor of cytokine signaling 7 (579 aa).

3 disordered regions span residues 1–25 (MVFR…GPSE), 89–270 (PPPP…RTQS), and 295–315 (QRGL…RSLS). Pro residues-rich tracts occupy residues 89–99 (PPPPQPPPPAA), 155–165 (PPGPELPPVPF), and 185–196 (QPPPPPPPPGPL). Positions 124–492 (AESLETNSCS…GKFLYFLRSR (369 aa)) are mediates interaction with SORBS3. Positions 206 to 217 (GSFKIRLSRLFR) are enriched in basic residues. The segment covering 301–311 (PHPPTPPPPPR) has biased composition (pro residues). Residues 398-507 (WYWGPMNWED…PTPVQLLYPV (110 aa)) enclose the SH2 domain. Residues 502 to 552 (QLLYPVSRFSNVKSLQHLCRFRIRQLVRIDHIPDLPLPKPLISYIRKFYYY) enclose the SOCS box domain.

In terms of assembly, substrate-recognition component of the ECS(SOCS7) complex, composed of SOCS7, CUL5, ELOB, ELOC and RNF7/RBX2. Interacts, via the third proline-rich region, with the second SH3 domain of the adapter protein NCK1. Also interacts with GRB2, INSR, PLCG1, SORBS3/vinexin, and phosphorylated STAT3 and STAT5. Interacts with SEPT6. Interacts with phosphorylated IRS4 and PIK3R1. As to expression, widely expressed with higher expression in brain and testis where it is expressed by spermatocytes and early spermatids. Also significantly expressed in spleen, skeletal muscle and kidney.

It localises to the cytoplasm. The protein localises to the nucleus. The protein resides in the cell membrane. The protein operates within protein modification; protein ubiquitination. Substrate-recognition component of a cullin-5-RING E3 ubiquitin-protein ligase complex (ECS complex, also named CRL5 complex), which mediates the ubiquitination and subsequent proteasomal degradation of target proteins, such as DAB1 and IRS1. Specifically recognizes and binds phosphorylated proteins via its SH2 domain, promoting their ubiquitination. The ECS(SOCS7) complex acts as a key regulator of reelin signaling by mediating ubiquitination and degradation of phosphorylated DAB1 in the cortical plate of the developing cerebral cortex, thereby regulating neuron positioning during cortex development. Functions in insulin signaling and glucose homeostasis through IRS1 ubiquitination and subsequent proteasomal degradation. Also inhibits prolactin, growth hormone and leptin signaling by preventing STAT3 and STAT5 activation, sequestering them in the cytoplasm and reducing their binding to DNA. This chain is Suppressor of cytokine signaling 7, found in Mus musculus (Mouse).